We begin with the raw amino-acid sequence, 308 residues long: MRPPVTGGRGGGGFRGGRDGGGRGFGGGRSFGGGRSGDRGRSGPRGRGRGAPRGRGGPPRGGMKGGSKVIVEPHRHAGVFIAKGKEDALVTKNLVPGEAVYNEKRISVQNEDGTKVEYRVWNPFRSKLAAAILGGVDNIWIKPGAKVLYLGAASGTTVSHVSDLVGPEGCVYAVEFSHRSGRDLVNMAKKRTNVIPIIEDARHPAKYRMLVGMVDVIFSDVAQPDQARILALNASFFLKTGGHFVISIKANCIDSTVAAEAVFQSEVKKLQQEQFKPAEQVTLEPFERDHACVVGGYRMPKKQKTPAS.

A disordered region spans residues 1-68 (MRPPVTGGRG…PRGGMKGGSK (68 aa)). Residues 22–35 (GRGFGGGRSFGGGR) show a composition bias toward gly residues. Residues 42-52 (SGPRGRGRGAP) are compositionally biased toward basic residues. Residues 53–65 (RGRGGPPRGGMKG) are compositionally biased toward gly residues. S-adenosyl-L-methionine is bound by residues 156 to 157 (TT), 175 to 176 (EF), 200 to 201 (DA), and 220 to 223 (DVAQ).

This sequence belongs to the methyltransferase superfamily. Fibrillarin family. As to quaternary structure, component of box C/D small nucleolar ribonucleoprotein (snoRNP) particles. Interacts with SKP1A. In terms of tissue distribution, expressed in roots, leaves and flowers. Expressed in stems.

It is found in the nucleus. Its subcellular location is the nucleolus. The catalysed reaction is a ribonucleotide in rRNA + S-adenosyl-L-methionine = a 2'-O-methylribonucleotide in rRNA + S-adenosyl-L-homocysteine + H(+). It carries out the reaction L-glutaminyl-[histone H2A] + S-adenosyl-L-methionine = N(5)-methyl-L-glutaminyl-[histone H2A] + S-adenosyl-L-homocysteine + H(+). In terms of biological role, S-adenosyl-L-methionine-dependent methyltransferase that has the ability to methylate both RNAs and proteins. Involved in pre-rRNA processing. Utilizes the methyl donor S-adenosyl-L-methionine to catalyze the site-specific 2'-hydroxyl methylation of ribose moieties in pre-ribosomal RNA. Site specificity is provided by a guide RNA that base pairs with the substrate. Methylation occurs at a characteristic distance from the sequence involved in base pairing with the guide RNA. Also acts as a protein methyltransferase by mediating methylation of 'Gln-105' of histone H2A (H2AQ105me), a modification that impairs binding of the FACT complex and is specifically present at 35S ribosomal DNA locus. Binds monophosphate phosphoinositides in vitro. The protein is rRNA 2'-O-methyltransferase fibrillarin 1 of Arabidopsis thaliana (Mouse-ear cress).